The following is a 371-amino-acid chain: Geranylgeranyl transferase type-2 subunit alpha (371 aa).

5 PFTA repeats span residues 45–79 (YSDE…NNYS), 92–126 (ILNQ…ELVK), 131–165 (NWKY…NMEL), 177–211 (INLD…KIYN), and 242–276 (LLKN…DDLF).

This sequence belongs to the protein prenyltransferase subunit alpha family. Heterodimer of an alpha and a beta subunit.

The enzyme catalyses geranylgeranyl diphosphate + L-cysteinyl-[protein] = S-geranylgeranyl-L-cysteinyl-[protein] + diphosphate. Functionally, catalyzes the transfer of a geranyl-geranyl moiety from geranyl-geranyl pyrophosphate to proteins having the C-terminal -XCC or -XCXC, where both cysteines may become modified. Acts on YPT1 and SEC4. The chain is Geranylgeranyl transferase type-2 subunit alpha (BET4) from Candida albicans (Yeast).